We begin with the raw amino-acid sequence, 78 residues long: Large ribosomal subunit protein bL28 (78 aa).

The interval 1-31 is disordered; that stretch reads MAAHCQVTGAEPGFGHSISHSHRRNKRRFDP.

The protein belongs to the bacterial ribosomal protein bL28 family.

The chain is Large ribosomal subunit protein bL28 from Arthrobacter sp. (strain FB24).